The primary structure comprises 415 residues: Probable glucan 1,3-beta-glucosidase A (415 aa).

The signal sequence occupies residues 1 to 22; that stretch reads MLSRLSQTALVALSLMTVLTEA. Catalysis depends on Glu210, which acts as the Proton donor. Intrachain disulfides connect Cys290/Cys414 and Cys315/Cys341. Glu307 serves as the catalytic Nucleophile. The segment at 335–359 is disordered; the sequence is SPRYGDCGNKRQGSSSGLSEQERSD.

The protein belongs to the glycosyl hydrolase 5 (cellulase A) family. As to quaternary structure, monomer. Requires Mn(2+) as cofactor.

Its subcellular location is the secreted. The catalysed reaction is Successive hydrolysis of beta-D-glucose units from the non-reducing ends of (1-&gt;3)-beta-D-glucans, releasing alpha-glucose.. Beta-glucanases participate in the metabolism of beta-glucan, the main structural component of the cell wall. It could also function biosynthetically as a transglycosylase. This is Probable glucan 1,3-beta-glucosidase A (exgA) from Aspergillus clavatus (strain ATCC 1007 / CBS 513.65 / DSM 816 / NCTC 3887 / NRRL 1 / QM 1276 / 107).